The following is a 215-amino-acid chain: Pyrrolidone-carboxylate peptidase (215 aa).

Active-site residues include glutamate 80, cysteine 143, and histidine 167.

The protein belongs to the peptidase C15 family. In terms of assembly, homotetramer.

It is found in the cytoplasm. The catalysed reaction is Release of an N-terminal pyroglutamyl group from a polypeptide, the second amino acid generally not being Pro.. In terms of biological role, removes 5-oxoproline from various penultimate amino acid residues except L-proline. This Bacillus cereus (strain Q1) protein is Pyrrolidone-carboxylate peptidase.